The chain runs to 141 residues: Large ribosomal subunit protein uL11 (141 aa).

Belongs to the universal ribosomal protein uL11 family. As to quaternary structure, part of the ribosomal stalk of the 50S ribosomal subunit. Interacts with L10 and the large rRNA to form the base of the stalk. L10 forms an elongated spine to which L12 dimers bind in a sequential fashion forming a multimeric L10(L12)X complex. One or more lysine residues are methylated.

Forms part of the ribosomal stalk which helps the ribosome interact with GTP-bound translation factors. This is Large ribosomal subunit protein uL11 from Latilactobacillus sakei subsp. sakei (strain 23K) (Lactobacillus sakei subsp. sakei).